The primary structure comprises 353 residues: THUMP domain-containing protein 1 (353 aa).

Polar residues predominate over residues methionine 1–glutamine 10. Disordered stretches follow at residues methionine 1–alanine 20 and tyrosine 73–glutamate 96. At alanine 2 the chain carries N-acetylalanine. A Phosphothreonine modification is found at threonine 79. Phosphoserine occurs at positions 86, 88, and 119. One can recognise a THUMP domain in the interval aspartate 147 to lysine 254. Serine 270 is modified (phosphoserine). The disordered stretch occupies residues serine 270 to serine 353. The span at aspartate 273–glycine 282 shows a compositional bias: polar residues. Residues asparagine 283 to aspartate 296 show a composition bias toward basic and acidic residues. Residues glutamine 297–valine 327 are compositionally biased toward polar residues.

This sequence belongs to the THUMPD1 family. Interacts with NAT10. Binds tRNA.

Its function is as follows. Functions as a tRNA-binding adapter to mediate NAT10-dependent tRNA acetylation modifying cytidine to N4-acetylcytidine (ac4C). The protein is THUMP domain-containing protein 1 (THUMPD1) of Homo sapiens (Human).